A 407-amino-acid polypeptide reads, in one-letter code: Aminoacylase-1 (407 aa).

An N-acetylalanine modification is found at alanine 2. Histidine 80 serves as a coordination point for Zn(2+). Aspartate 82 is a catalytic residue. Zn(2+) is bound at residue aspartate 113. Glutamate 147 acts as the Proton acceptor in catalysis. Zn(2+)-binding residues include glutamate 148, glutamate 175, and histidine 372.

Belongs to the peptidase M20A family. As to quaternary structure, homodimer. Interacts with SPHK1. It depends on Zn(2+) as a cofactor.

The protein resides in the cytoplasm. It catalyses the reaction an N-acyl-L-amino acid + H2O = an L-alpha-amino acid + a carboxylate. The catalysed reaction is N-acetyl-L-methionine + H2O = L-methionine + acetate. The enzyme catalyses N-acetyl-L-glutamine + H2O = L-glutamine + acetate. Functionally, catalyzes the hydrolysis of N-acetylated amino acids to acetate and free amino acids. The sequence is that of Aminoacylase-1 (ACY1) from Sus scrofa (Pig).